The chain runs to 567 residues: Lactase-like protein (567 aa).

The signal sequence occupies residues methionine 1–alanine 21. Residues arginine 23–glutamate 541 lie on the Extracellular side of the membrane. Residues asparagine 80, asparagine 171, and asparagine 245 are each glycosylated (N-linked (GlcNAc...) asparagine). The helical transmembrane segment at isoleucine 542–leucine 562 threads the bilayer. Topologically, residues leucine 563–serine 567 are cytoplasmic.

Belongs to the glycosyl hydrolase 1 family. Klotho subfamily. May form dimers.

The protein resides in the endoplasmic reticulum membrane. In terms of biological role, plays a role in formation of the lens suture in the eye, which is important for normal optical properties of the lens. The chain is Lactase-like protein (LCTL) from Homo sapiens (Human).